The chain runs to 466 residues: Ribulose bisphosphate carboxylase large chain (466 aa).

Position 5 is an N6,N6,N6-trimethyllysine (lysine 5). Asparagine 114 and threonine 164 together coordinate substrate. Catalysis depends on lysine 166, which acts as the Proton acceptor. Lysine 168 contributes to the substrate binding site. Mg(2+) is bound by residues lysine 192, aspartate 194, and glutamate 195. Lysine 192 carries the post-translational modification N6-carboxylysine. The active-site Proton acceptor is histidine 285. Substrate-binding residues include arginine 286, histidine 318, and serine 370.

The protein belongs to the RuBisCO large chain family. Type I subfamily. As to quaternary structure, heterohexadecamer of 8 large chains and 8 small chains; disulfide-linked. The disulfide link is formed within the large subunit homodimers. Mg(2+) serves as cofactor. Post-translationally, the disulfide bond which can form in the large chain dimeric partners within the hexadecamer appears to be associated with oxidative stress and protein turnover.

The protein resides in the plastid. It localises to the chloroplast. The enzyme catalyses 2 (2R)-3-phosphoglycerate + 2 H(+) = D-ribulose 1,5-bisphosphate + CO2 + H2O. It catalyses the reaction D-ribulose 1,5-bisphosphate + O2 = 2-phosphoglycolate + (2R)-3-phosphoglycerate + 2 H(+). RuBisCO catalyzes two reactions: the carboxylation of D-ribulose 1,5-bisphosphate, the primary event in carbon dioxide fixation, as well as the oxidative fragmentation of the pentose substrate in the photorespiration process. Both reactions occur simultaneously and in competition at the same active site. The polypeptide is Ribulose bisphosphate carboxylase large chain (Silene gallica (Common catchfly)).